The primary structure comprises 54 residues: Light-harvesting protein B-800/850 alpha chain (54 aa).

The Cytoplasmic segment spans residues 1–14; sequence MTNGKIWLVVKPTV. A helical transmembrane segment spans residues 15 to 35; that stretch reads GVPLFLSAAVIASVVIHAAVL. Histidine 31 is a binding site for a bacteriochlorophyll. Topologically, residues 36 to 54 are periplasmic; the sequence is TTTTWLPAYYQGSAAVAAE.

Belongs to the antenna complex alpha subunit family. In terms of assembly, the core complex is formed by different alpha and beta chains, binding bacteriochlorophyll molecules, and arranged most probably in tetrameric structures disposed around the reaction center. The non-pigmented gamma chains may constitute additional components.

It localises to the cell inner membrane. Antenna complexes are light-harvesting systems, which transfer the excitation energy to the reaction centers. The protein is Light-harvesting protein B-800/850 alpha chain (pucA) of Cereibacter sphaeroides (Rhodobacter sphaeroides).